Reading from the N-terminus, the 257-residue chain is Phosphonates import ATP-binding protein PhnC (257 aa).

In terms of domain architecture, ABC transporter spans 7–251 (IQLKDVSKIY…VFTDIYNGGD (245 aa)). 40-47 (GLSGAGKS) is an ATP binding site.

It belongs to the ABC transporter superfamily. Phosphonates importer (TC 3.A.1.9.1) family. The complex is composed of two ATP-binding proteins (PhnC), two transmembrane proteins (PhnE) and a solute-binding protein (PhnD).

The protein localises to the cell membrane. It carries out the reaction phosphonate(out) + ATP + H2O = phosphonate(in) + ADP + phosphate + H(+). Part of the ABC transporter complex PhnCDE involved in phosphonates import. Responsible for energy coupling to the transport system. This chain is Phosphonates import ATP-binding protein PhnC, found in Lactobacillus acidophilus (strain ATCC 700396 / NCK56 / N2 / NCFM).